The following is a 427-amino-acid chain: Trigger factor (427 aa).

In terms of domain architecture, PPIase FKBP-type spans 163-248; sequence GDIVVIDFAG…LKEIKRKELA (86 aa).

Belongs to the FKBP-type PPIase family. Tig subfamily.

Its subcellular location is the cytoplasm. The catalysed reaction is [protein]-peptidylproline (omega=180) = [protein]-peptidylproline (omega=0). Its function is as follows. Involved in protein export. Acts as a chaperone by maintaining the newly synthesized protein in an open conformation. Functions as a peptidyl-prolyl cis-trans isomerase. This Carboxydothermus hydrogenoformans (strain ATCC BAA-161 / DSM 6008 / Z-2901) protein is Trigger factor.